The sequence spans 414 residues: Histidine--tRNA ligase (414 aa).

Belongs to the class-II aminoacyl-tRNA synthetase family. As to quaternary structure, homodimer.

Its subcellular location is the cytoplasm. The enzyme catalyses tRNA(His) + L-histidine + ATP = L-histidyl-tRNA(His) + AMP + diphosphate + H(+). The sequence is that of Histidine--tRNA ligase from Mycoplasma mycoides subsp. mycoides SC (strain CCUG 32753 / NCTC 10114 / PG1).